A 499-amino-acid chain; its full sequence is Glycerol kinase 2 (499 aa).

Threonine 13 is an ADP binding site. Residues threonine 13, threonine 14, and serine 15 each coordinate ATP. Threonine 13 serves as a coordination point for sn-glycerol 3-phosphate. Residue arginine 17 participates in ADP binding. Arginine 83, glutamate 84, tyrosine 134, and aspartate 241 together coordinate sn-glycerol 3-phosphate. Arginine 83, glutamate 84, tyrosine 134, aspartate 241, and glutamine 242 together coordinate glycerol. Residues threonine 263 and glycine 306 each coordinate ADP. 4 residues coordinate ATP: threonine 263, glycine 306, glutamine 310, and glycine 407. Glycine 407 contributes to the ADP binding site.

The protein belongs to the FGGY kinase family.

The enzyme catalyses glycerol + ATP = sn-glycerol 3-phosphate + ADP + H(+). It functions in the pathway polyol metabolism; glycerol degradation via glycerol kinase pathway; sn-glycerol 3-phosphate from glycerol: step 1/1. Its function is as follows. Key enzyme in the regulation of glycerol uptake and metabolism. Catalyzes the phosphorylation of glycerol to yield sn-glycerol 3-phosphate. This is Glycerol kinase 2 from Saccharolobus solfataricus (strain ATCC 35092 / DSM 1617 / JCM 11322 / P2) (Sulfolobus solfataricus).